Here is a 2042-residue protein sequence, read N- to C-terminus: MWLVTFFLLYSLRKAHTEDVGTSLYFVNDSIQQVTFSSTVGVVIPCPAAGSPSAVLRWYLATGDDIYDVPHIRHVHANGTLQLYPFSPSAFNSFIHDNDYFCTAENSAGKIRSPNIRVKAVFREPYTVRVEDQRSMRGNVAVFKCLIPSSVQEYVSVVSWEKDTVSIIPENRFFITSYGGLYISDVQKEDALSTYRCITKHKYSGETRQSNGARLSVSDADPAESIPTMLDSFQSREVRAGRLVELPCIASGYPNPAIRWLKDGRPLPADGRWAKRITGLSIADLRVEDSGTYICEVTNTFGSAEVTGTLTVIDPLRVTLTPKKLKTGIGSTVILSCALSGSPEYVIRWYRNTDLVVVDDFISIRGISNETLLITAAQKSHSGAYQCFATRKSQTAQDFSIITLEDGTPRIVSSFSEKVVNPGEQFSLMCAAKGAPPPTVTWALDDEPIPRDNGHRTNQYTMSDGTTVSHMNVTSPQIKDGGVYRCTARNSVGSAEYQARINVRGPPSIRAMKNITAVAGRDTFINCRVIGYPYYSIKWYKDSLLLPDNHRQVVFENGTLKLMDVQKGMDEGEYLCSVLIQPQLSISQSVHVTVKVPPLIQPFEFPPASIGQLLYIPCVVSSGDMPIHITWRKDGHVILSGSGVTIESKEFMSSLQISSVSLKHNGNYTCIASNAAATVSRERQLIVRVPPRFVVQPNNQDGIYGKAGVLNCSVDGYPPPKVMWKHAKGSGNPQQYHPIPLTGRIQILPNSSLLIRHVLEEDIGYYLCQASNGVGTDISKSMFLTVKIPAMITSHPNTTIAIKGQSKELNCTARGERPIIIRWEKGDTVIDPDRNMRYAIATKDNGDEVISTLKLKPADRGDSVFFSCHAINSYGEDRGLIQLTVQEPPDPPELEIREVKARSMNLRWTQRFDGNSIITGFDIEYKNKSDSWDFKQSTRNISPTINQANIVDLHPASVYSIRMYSFNKIGRSEPSKELTISTEEAAPDGPPMDVTLQPMTSQSIQVTWKAPKKELQNGVIRGYQIGYRENSPGSNGQYSIVEMKATGDSEVYTLDNLKKFAQYGVVVQAFNRAGTGPSSSEINATTLEDVPSQPPENVRAISITSDVAVISWSEPPRSTLNGVLKGYRVIFWSLYMDGEWGEMQNITTTRERVELRGMEKFTNYSVQVLAYTQAGDGVRSSVLYIQTKEDIPGPPAGIKAVPSSASSVVVSWLPPAKPNGIIRKYTIFCSSPGSGQPAPSEYETSPDQLFYRIAHLNRGQQYMLWVAAVTSAGRGNISEKVTIEPAGKAPAKIISFGGTVTTPWMKDVRLPCNSVGEPVPAIKWTKDSEDSAIPVTVDGHRLIQANGTLVLRSVKAEDSGYYTCTATNTWGFDTIIINLLVQVPPDQPRLTVSKTSASSITLAWIPGDNGGSSIRGFVLQYSVDNSEEWKDVFISSSERSFKLESLKCGTWYKVKLAAKNSVGAGRISEIIEAKTHGREPSFSKDQHLFTHINSTHARLNLQGWSSGGCPITAIVLEYRPKGNWGWQSLRTNSSGEVFLTELREATWYELRMKACNSAGCGNESTQFATLDYDGSTIPPIKSAQGEGDDVKKLFTIACPIILATLGVALLFIIRKKRKEKRLKRLRDAKSLAEMLISKNNRSFDTPVKGPPQGPRLHIDIPRVQLLIEDKEGIKQLGDDKATIPVTDTEFSQAVNPQSFCTGVSLHHPALIQNTGPLIDMSDIRPGTNPVSRKSVKSAHSTRNRYSSQWTLTKCQASTPARTLTSDWRTVGSQHGITVTESDSYSASLSQDTDKGRNSMVSTESASSTYEELARAYEHAKLEEQLQHAKFEITECFISDSSSDQMTTGTTDNADSMTSMSTPSEPGICRFTASPPKPQDSERGKSVAVPIPHRASKSDYCNLPLYVKSDAFFRKPDSHEPCPVVPPREASIRSLARGYHPPARHLTLDPAAKPPGLPPPSSSSSSTTLPQRTLPMPTAASTAPAPAPAPAAPAEPPANTTTTTTTHSKVGGSRDSLLEMSTSGAGRAQKQGAGAYSKSYTLV.

Residues 1–17 (MWLVTFFLLYSLRKAHT) form the signal peptide. At 18–1592 (EDVGTSLYFV…AQGEGDDVKK (1575 aa)) the chain is on the extracellular side. N-linked (GlcNAc...) asparagine glycosylation is found at asparagine 28 and asparagine 78. Ig-like C2-type domains lie at 37-107 (SSTV…AENS), 114-216 (PNIR…ARLS), 227-311 (PTML…GTLT), 315-403 (PLRV…SIIT), 409-502 (PRIV…ARIN), 507-587 (PSIR…LSIS), 597-686 (PPLI…RQLI), 691-785 (PRFV…MFLT), and 789-886 (PAMI…LTVQ). Disulfide bonds link cysteine 46/cysteine 102, cysteine 145/cysteine 197, cysteine 248/cysteine 295, cysteine 337/cysteine 387, and cysteine 430/cysteine 486. Residues asparagine 369, asparagine 472, asparagine 514, asparagine 557, asparagine 667, asparagine 711, asparagine 750, asparagine 797, and asparagine 810 are each glycosylated (N-linked (GlcNAc...) asparagine). Disulfide bonds link cysteine 527–cysteine 576 and cysteine 618–cysteine 670. Cysteine 712 and cysteine 768 form a disulfide bridge. Residues cysteine 811 and cysteine 868 are joined by a disulfide bond. Fibronectin type-III domains are found at residues 888–985 (PPDP…TEEA), 990–1089 (PPMD…TLED), 1094–1190 (PPEN…TKED), and 1194–1289 (PPAG…AGKA). N-linked (GlcNAc...) asparagine glycosylation is found at asparagine 927, asparagine 1083, asparagine 1145, asparagine 1163, asparagine 1276, and asparagine 1346. The Ig-like C2-type 10 domain occupies 1279–1368 (EKVTIEPAGK…SGYYTCTATN (90 aa)). Cysteine 1312 and cysteine 1364 form a disulfide bridge. 2 Fibronectin type-III domains span residues 1384 to 1478 (PPDQ…THGR) and 1479 to 1579 (EPSF…TIPP). 3 N-linked (GlcNAc...) asparagine glycosylation sites follow: asparagine 1493, asparagine 1532, and asparagine 1562. The helical transmembrane segment at 1593 to 1613 (LFTIACPIILATLGVALLFII) threads the bilayer. The Cytoplasmic portion of the chain corresponds to 1614–2042 (RKKRKEKRLK…GAYSKSYTLV (429 aa)). 4 disordered regions span residues 1716 to 1742 (PLID…HSTR), 1781 to 1805 (SDSY…TESA), 1841 to 1865 (SSDQ…PSEP), and 1940 to 2042 (PPAR…YTLV). A compositionally biased stretch (basic residues) spans 1733–1742 (KSVKSAHSTR). Composition is skewed to polar residues over residues 1781 to 1790 (SDSYSASLSQ) and 1841 to 1863 (SSDQ…STPS). Pro residues predominate over residues 1951–1960 (AKPPGLPPPS). Over residues 1961-1983 (SSSSSTTLPQRTLPMPTAASTAP) the composition is skewed to low complexity. The segment covering 1984–1995 (APAPAPAAPAEP) has biased composition (pro residues). Low complexity-rich tracts occupy residues 1996–2005 (PANTTTTTTT) and 2023–2034 (GAGRAQKQGAGA).

Homodimer; mediates homophilic interactions to promote cell adhesion. In terms of tissue distribution, SDK1, SDK2, DSCAM and DSCAML1 are expressed in non-overlapping subsets of interneurons and retinal ganglion cells (RGCs) that form synapses in distinct inner plexiform layer (IPL) sublaminae.

It localises to the cell membrane. Its subcellular location is the synapse. In terms of biological role, cell adhesion molecule that plays a role in neuronal self-avoidance. Promotes repulsion between specific neuronal processes of either the same cell or the same subtype of cells. Adhesion molecule that promotes lamina-specific synaptic connections in the retina: expressed in specific subsets of interneurons and retinal ganglion cells (RGCs) and promotes synaptic connectivity via homophilic interactions. This is Cell adhesion molecule DSCAML1 (DSCAML1) from Gallus gallus (Chicken).